The following is a 903-amino-acid chain: Protein translocase subunit SecA (903 aa).

ATP-binding positions include Q85, 103–107 (GEGKT), and D492. Positions 863-890 (GDGVKQPVRRDKKVGRNSPCPCGSGKKY) are disordered. Residues C882, C884, C893, and C894 each coordinate Zn(2+).

It belongs to the SecA family. Monomer and homodimer. Part of the essential Sec protein translocation apparatus which comprises SecA, SecYEG and auxiliary proteins SecDF. Other proteins may also be involved. The cofactor is Zn(2+).

It localises to the cell membrane. It is found in the cytoplasm. The catalysed reaction is ATP + H2O + cellular proteinSide 1 = ADP + phosphate + cellular proteinSide 2.. Its function is as follows. Part of the Sec protein translocase complex. Interacts with the SecYEG preprotein conducting channel. Has a central role in coupling the hydrolysis of ATP to the transfer of proteins into and across the cell membrane, serving as an ATP-driven molecular motor driving the stepwise translocation of polypeptide chains across the membrane. This chain is Protein translocase subunit SecA, found in Desulforudis audaxviator (strain MP104C).